We begin with the raw amino-acid sequence, 230 residues long: ATP synthase subunit a (230 aa).

The next 5 helical transmembrane spans lie at 17-37 (LPIT…FIMA), 78-98 (IFPF…IGVI), 107-127 (DLSV…WFGI), 165-187 (LFGN…GFLV), and 198-218 (EAII…AGGI).

Belongs to the ATPase A chain family. In terms of assembly, F-type ATPases have 2 components, CF(1) - the catalytic core - and CF(0) - the membrane proton channel. CF(1) has five subunits: alpha(3), beta(3), gamma(1), delta(1), epsilon(1). CF(0) has three main subunits: a(1), b(2) and c(9-12). The alpha and beta chains form an alternating ring which encloses part of the gamma chain. CF(1) is attached to CF(0) by a central stalk formed by the gamma and epsilon chains, while a peripheral stalk is formed by the delta and b chains.

The protein localises to the cell inner membrane. Functionally, key component of the proton channel; it plays a direct role in the translocation of protons across the membrane. The protein is ATP synthase subunit a of Legionella pneumophila (strain Paris).